Reading from the N-terminus, the 2381-residue chain is Myb-like protein U (2381 aa).

4 disordered regions span residues 1–85 (MKTK…TSNN), 148–167 (SSSGTVNNSNNNNNNDGGIS), 178–492 (PTIP…NNNN), and 641–696 (NINN…GDEM). Composition is skewed to low complexity over residues 30 to 41 (SKSSSKVSQSSS) and 64 to 79 (TIPAPLSTTITPPTLT). 3 stretches are compositionally biased toward low complexity: residues 192–204 (NLSSSTSSTNILS), 225–261 (ENVNNINSGNVKNSKNNSGSSISSSISSSSSSGSSSS), and 291–315 (SNKSNSKKSSSNKSKSPSNKNNNKK). Residues 331-343 (SEYDSSDSSDMDL) are compositionally biased toward acidic residues. Residues 363 to 405 (TTKPNNSNSNNNNNNNSINSTIPASNNINSANNSKTTNKNITS) are compositionally biased toward low complexity. Over residues 421-430 (SETPILTSVK) the composition is skewed to polar residues. Composition is skewed to low complexity over residues 435 to 492 (QQIP…NNNN) and 641 to 692 (NINN…NNNN). Residues 856 to 899 (WHEEEKLLFRELFCAYGRDWQMVSTLMCGTKSPTQIKNFYYDVR) form the Myb-like domain. Disordered regions lie at residues 932–1024 (KPEQ…ETPP), 1068–1093 (INQSSNSSPVNNNNSNNNNNNNNINP), 1145–1207 (TSST…SNQE), 1295–1339 (STTT…PPID), 1422–1474 (PYYP…LSTP), 1597–1647 (PPAT…TTIV), 1667–1849 (PIVK…PPPV), 1961–1985 (TTVPGTTTTTNPNGSIPPKPSNGLA), 2055–2106 (TSTV…NGLT), and 2122–2280 (LSGI…NKND). The segment covering 936 to 953 (NVNSNNNNNGGGNSLKDG) has biased composition (low complexity). Basic residues predominate over residues 982–995 (VKKKSRTASKRSFR). A compositionally biased stretch (polar residues) spans 1000-1013 (ANETNRTPKNQPKP). Low complexity-rich tracts occupy residues 1069–1092 (NQSSNSSPVNNNNSNNNNNNNNIN), 1145–1186 (TSST…TGSA), 1195–1205 (VNNNNNNNLSN), and 1306–1325 (TTTPTQQQFQQLQPTQQLQQ). Positions 1326–1337 (LPPPPPPPPKPP) are enriched in pro residues. Positions 1427 to 1474 (PSSTTTNSATSTPTSTPTSTPSTSASTLTPTSTPTSTPVPAPTSLSTP) are enriched in low complexity. The span at 1597-1606 (PPATITPILP) shows a compositional bias: pro residues. The span at 1618-1637 (SSSSSSSSSSSSSSSSSSSS) shows a compositional bias: low complexity. Polar residues-rich tracts occupy residues 1638–1647 (TTKNNSTTIV) and 1671–1701 (QESNSPSKTLPPSNSPSKTLPLSNSPSKTLL). Composition is skewed to low complexity over residues 1702–1735 (PSNSSIPNKSTPSPIPKPTTSSTTYPVTTSNPSS) and 1743–1809 (TSNK…TLKP). Residues 1829 to 1844 (APTNSTNQNTIPNATT) are compositionally biased toward polar residues. Composition is skewed to low complexity over residues 1961–1970 (TTVPGTTTTT) and 2065–2097 (NNMTTTTTSSTSTTMTTPTSTNTTTNGTPQQST). A compositionally biased stretch (polar residues) spans 2129–2138 (NTLSGKSPTP). Residues 2154 to 2209 (PSLSSSSANPISITNNTTSLSQQSNTTNTMPSTVSLSSGSTSINSNSSNSKSLRSP) are compositionally biased toward low complexity. The segment covering 2210 to 2278 (KSSDNDGKES…NNNDKFDSNK (69 aa)) has biased composition (basic and acidic residues).

The protein is Myb-like protein U (mybU) of Dictyostelium discoideum (Social amoeba).